Reading from the N-terminus, the 386-residue chain is 26S proteasome non-ATPase regulatory subunit 13 homolog A (386 aa).

Ala2 carries the post-translational modification N-acetylalanine. In terms of domain architecture, PCI spans 173–347 (EFSDFYKSAL…GTIYVSWAQP (175 aa)).

This sequence belongs to the proteasome subunit S11 family. Component of the 19S regulatory particle (RP/PA700) lid subcomplex of the 26S proteasome. The 26S proteasome is composed of a core protease (CP), known as the 20S proteasome, capped at one or both ends by the 19S regulatory particle (RP/PA700). The RP/PA700 complex is composed of at least 17 different subunits in two subcomplexes, the base and the lid, which form the portions proximal and distal to the 20S proteolytic core, respectively. Ubiquitous with highest expression in flowers.

In terms of biological role, acts as a regulatory subunit of the 26S proteasome which is involved in the ATP-dependent degradation of ubiquitinated proteins. This is 26S proteasome non-ATPase regulatory subunit 13 homolog A (RPN9A) from Arabidopsis thaliana (Mouse-ear cress).